The following is a 466-amino-acid chain: Ribulose bisphosphate carboxylase (466 aa).

Asn111 contributes to the substrate binding site. Catalysis depends on Lys166, which acts as the Proton acceptor. Position 168 (Lys168) interacts with substrate. Mg(2+) contacts are provided by Lys191, Asp193, and Glu194. An N6-carboxylysine modification is found at Lys191. Catalysis depends on His287, which acts as the Proton acceptor. Positions 288, 321, and 368 each coordinate substrate.

The protein belongs to the RuBisCO large chain family. Type II subfamily. Homodimer. It depends on Mg(2+) as a cofactor.

The catalysed reaction is 2 (2R)-3-phosphoglycerate + 2 H(+) = D-ribulose 1,5-bisphosphate + CO2 + H2O. It carries out the reaction D-ribulose 1,5-bisphosphate + O2 = 2-phosphoglycolate + (2R)-3-phosphoglycerate + 2 H(+). In terms of biological role, ruBisCO catalyzes two reactions: the carboxylation of D-ribulose 1,5-bisphosphate, the primary event in carbon dioxide fixation, as well as the oxidative fragmentation of the pentose substrate. Both reactions occur simultaneously and in competition at the same active site. In Rhodospirillum rubrum (strain ATCC 11170 / ATH 1.1.1 / DSM 467 / LMG 4362 / NCIMB 8255 / S1), this protein is Ribulose bisphosphate carboxylase.